The primary structure comprises 137 residues: MKKKKTYGEVYALGQYISMSAPKARRVIDQIRGRSYEETLMLLALMPYRACDPILKLVNSAAANARHNMSFNEATLVISKAEVNEGTTVKKLKPRARGRSYPIRRPTCHIRIVLQDTSFDEFEEDFFSLKKDAWEKK.

The protein belongs to the universal ribosomal protein uL22 family. Part of the 50S ribosomal subunit.

It localises to the plastid. It is found in the chloroplast. Its function is as follows. This protein binds specifically to 23S rRNA. The globular domain of the protein is located near the polypeptide exit tunnel on the outside of the subunit, while an extended beta-hairpin is found that lines the wall of the exit tunnel in the center of the 70S ribosome. This Oenothera argillicola (Appalachian evening primrose) protein is Large ribosomal subunit protein uL22c (rpl22).